Consider the following 444-residue polypeptide: MQENYKGKAYDILKNLNIEEGDLIEIKKGDLRIRGILLPSYSKDDRIFVIKLDNGYNIGISIDNITEIKPIEKKSSKDRESERREVHNGAKSEIKIISTGGTIVSRVEYETGAVRPALTTEEIIQFLPEINEIAKVDAEVLFSILSENMKPEFWVKIAESVKKAFDEGNTGIVIAHGTDTMAYTASALAFSLRSLQGPVVLVGSQRSSDRPSSDSAINLLSAVITAKYAPFGEVVVNMHAESSDTYALVHRGVKVRKMHSSRRDAFQSVNDKPLAKVLWKERKLVMLNEKYISKKDETLLDAKFDNRVFLLYYYPGLDRDFLEQMLTNTKIRGIIIAGTGLGHTSSDHIELFRKATKDGIFIGMTTQCLFGRVNMNVYTTGRQLLDAGVTPLEDMLPEVALVKLMWVLAHEQDLEKIQNLMITNLVGEINPRHTLDLFPRWSYE.

In terms of domain architecture, Asparaginase/glutaminase spans 92–424 (SEIKIISTGG…EKIQNLMITN (333 aa)). Residues threonine 102, threonine 178, aspartate 179, and lysine 257 contribute to the active site.

The protein belongs to the asparaginase 1 family. GatD subfamily. In terms of assembly, heterodimer of GatD and GatE.

The catalysed reaction is L-glutamyl-tRNA(Gln) + L-glutamine + ATP + H2O = L-glutaminyl-tRNA(Gln) + L-glutamate + ADP + phosphate + H(+). Functionally, allows the formation of correctly charged Gln-tRNA(Gln) through the transamidation of misacylated Glu-tRNA(Gln) in organisms which lack glutaminyl-tRNA synthetase. The reaction takes place in the presence of glutamine and ATP through an activated gamma-phospho-Glu-tRNA(Gln). The GatDE system is specific for glutamate and does not act on aspartate. The protein is Glutamyl-tRNA(Gln) amidotransferase subunit D of Saccharolobus solfataricus (strain ATCC 35092 / DSM 1617 / JCM 11322 / P2) (Sulfolobus solfataricus).